The primary structure comprises 305 residues: UDP-3-O-acyl-N-acetylglucosamine deacetylase (305 aa).

Zn(2+) is bound by residues His-79, His-238, and Asp-242. His-265 acts as the Proton donor in catalysis.

The protein belongs to the LpxC family. Zn(2+) is required as a cofactor.

It catalyses the reaction a UDP-3-O-[(3R)-3-hydroxyacyl]-N-acetyl-alpha-D-glucosamine + H2O = a UDP-3-O-[(3R)-3-hydroxyacyl]-alpha-D-glucosamine + acetate. The protein operates within glycolipid biosynthesis; lipid IV(A) biosynthesis; lipid IV(A) from (3R)-3-hydroxytetradecanoyl-[acyl-carrier-protein] and UDP-N-acetyl-alpha-D-glucosamine: step 2/6. Its function is as follows. Catalyzes the hydrolysis of UDP-3-O-myristoyl-N-acetylglucosamine to form UDP-3-O-myristoylglucosamine and acetate, the committed step in lipid A biosynthesis. The sequence is that of UDP-3-O-acyl-N-acetylglucosamine deacetylase from Salmonella paratyphi A (strain ATCC 9150 / SARB42).